The primary structure comprises 402 residues: Phosphoglycerate kinase (402 aa).

Substrate-binding positions include 21–23 (DFN), arginine 36, 59–62 (HLGR), arginine 119, and arginine 154. Residues lysine 207, glycine 298, glutamate 329, and 356–359 (GGDA) each bind ATP.

The protein belongs to the phosphoglycerate kinase family. As to quaternary structure, monomer.

The protein localises to the cytoplasm. It carries out the reaction (2R)-3-phosphoglycerate + ATP = (2R)-3-phospho-glyceroyl phosphate + ADP. It participates in carbohydrate degradation; glycolysis; pyruvate from D-glyceraldehyde 3-phosphate: step 2/5. This chain is Phosphoglycerate kinase (pgk), found in Chlamydia pneumoniae (Chlamydophila pneumoniae).